Consider the following 481-residue polypeptide: Glycogen synthase (481 aa).

Lys16 contacts ADP-alpha-D-glucose.

This sequence belongs to the glycosyltransferase 1 family. Bacterial/plant glycogen synthase subfamily.

The enzyme catalyses [(1-&gt;4)-alpha-D-glucosyl](n) + ADP-alpha-D-glucose = [(1-&gt;4)-alpha-D-glucosyl](n+1) + ADP + H(+). It functions in the pathway glycan biosynthesis; glycogen biosynthesis. Functionally, synthesizes alpha-1,4-glucan chains using ADP-glucose. The polypeptide is Glycogen synthase (Cellvibrio japonicus (strain Ueda107) (Pseudomonas fluorescens subsp. cellulosa)).